Reading from the N-terminus, the 105-residue chain is Small ribosomal subunit protein uS10 (105 aa).

It belongs to the universal ribosomal protein uS10 family. Part of the 30S ribosomal subunit.

In terms of biological role, involved in the binding of tRNA to the ribosomes. This Crocosphaera subtropica (strain ATCC 51142 / BH68) (Cyanothece sp. (strain ATCC 51142)) protein is Small ribosomal subunit protein uS10.